A 489-amino-acid polypeptide reads, in one-letter code: Blue-light-activated histidine kinase (489 aa).

Positions 19–93 (ATDPFRAAVE…AIKSAIAAEK (75 aa)) constitute a PAS domain. The residue at position 69 (C69) is an S-4a-FMN cysteine. PAC domains lie at 93 to 147 (KPID…ELEK) and 232 to 281 (YSIE…NKAL). Residues 259 to 341 (NPLVLGIVQD…LLKENWAGAT (83 aa)) form an HWE histidine kinase domain region. H288 bears the Phosphohistidine; by autocatalysis mark.

In terms of processing, FMN binds covalently to cysteine after exposure to blue light and this bond is spontaneously broken in the dark.

The enzyme catalyses ATP + protein L-histidine = ADP + protein N-phospho-L-histidine.. In terms of biological role, photosensitive kinase that is involved in increased bacterial virulence upon exposure to light. Once ejected from an infected animal host, sunlight acts as an environmental signal that increases the virulence of the bacterium, preparing it for infection of the next host. This photoreceptor protein is directly related to the bacterium's survival and replication within host macrophages. This is Blue-light-activated histidine kinase from Brucella ovis (strain ATCC 25840 / 63/290 / NCTC 10512).